The chain runs to 168 residues: Small ribosomal subunit protein uS5 (168 aa).

Residues 13-76 (IQEKLVAVRR…ENARRNMISV (64 aa)) enclose the S5 DRBM domain.

This sequence belongs to the universal ribosomal protein uS5 family. In terms of assembly, part of the 30S ribosomal subunit. Contacts proteins S4 and S8.

With S4 and S12 plays an important role in translational accuracy. In terms of biological role, located at the back of the 30S subunit body where it stabilizes the conformation of the head with respect to the body. This is Small ribosomal subunit protein uS5 from Coxiella burnetii (strain RSA 493 / Nine Mile phase I).